We begin with the raw amino-acid sequence, 354 residues long: Selenide, water dikinase (354 aa).

Residue Cys-23 is part of the active site. Residues Lys-26 and 54–56 contribute to the ATP site; that span reads TSD. Mg(2+) is bound at residue Asp-57. Residues Asp-74, Asp-97, and 145–147 each bind ATP; that span reads GHS. Mg(2+) is bound at residue Asp-97. Asp-233 lines the Mg(2+) pocket.

This sequence belongs to the selenophosphate synthase 1 family. Class I subfamily. In terms of assembly, homodimer. Requires Mg(2+) as cofactor.

The enzyme catalyses hydrogenselenide + ATP + H2O = selenophosphate + AMP + phosphate + 2 H(+). Its function is as follows. Synthesizes selenophosphate from selenide and ATP. The protein is Selenide, water dikinase of Burkholderia ambifaria (strain MC40-6).